A 69-amino-acid chain; its full sequence is Putative membrane protein insertion efficiency factor (69 aa).

It belongs to the UPF0161 family.

It is found in the cell inner membrane. Could be involved in insertion of integral membrane proteins into the membrane. This Chromobacterium violaceum (strain ATCC 12472 / DSM 30191 / JCM 1249 / CCUG 213 / NBRC 12614 / NCIMB 9131 / NCTC 9757 / MK) protein is Putative membrane protein insertion efficiency factor.